The chain runs to 247 residues: Carboxy-S-adenosyl-L-methionine synthase (247 aa).

S-adenosyl-L-methionine is bound by residues Tyr-40, 65–67 (GCS), 90–91 (DN), 122–123 (DI), Asn-137, and Arg-204.

This sequence belongs to the class I-like SAM-binding methyltransferase superfamily. Cx-SAM synthase family. In terms of assembly, homodimer.

It carries out the reaction prephenate + S-adenosyl-L-methionine = carboxy-S-adenosyl-L-methionine + 3-phenylpyruvate + H2O. Functionally, catalyzes the conversion of S-adenosyl-L-methionine (SAM) to carboxy-S-adenosyl-L-methionine (Cx-SAM). This chain is Carboxy-S-adenosyl-L-methionine synthase, found in Stutzerimonas stutzeri (strain A1501) (Pseudomonas stutzeri).